A 78-amino-acid polypeptide reads, in one-letter code: Small ribosomal subunit protein bS18 (78 aa).

It belongs to the bacterial ribosomal protein bS18 family. Part of the 30S ribosomal subunit. Forms a tight heterodimer with protein bS6.

Its function is as follows. Binds as a heterodimer with protein bS6 to the central domain of the 16S rRNA, where it helps stabilize the platform of the 30S subunit. The protein is Small ribosomal subunit protein bS18 of Lactobacillus delbrueckii subsp. bulgaricus (strain ATCC BAA-365 / Lb-18).